The chain runs to 529 residues: Bifunctional purine biosynthesis protein PurH (529 aa).

Positions 1–148 (MQQRRPVRRA…KNHKDVAIVV (148 aa)) constitute an MGS-like domain. Lys-287 is subject to N6-acetyllysine.

The protein belongs to the PurH family.

It catalyses the reaction (6R)-10-formyltetrahydrofolate + 5-amino-1-(5-phospho-beta-D-ribosyl)imidazole-4-carboxamide = 5-formamido-1-(5-phospho-D-ribosyl)imidazole-4-carboxamide + (6S)-5,6,7,8-tetrahydrofolate. The enzyme catalyses IMP + H2O = 5-formamido-1-(5-phospho-D-ribosyl)imidazole-4-carboxamide. Its pathway is purine metabolism; IMP biosynthesis via de novo pathway; 5-formamido-1-(5-phospho-D-ribosyl)imidazole-4-carboxamide from 5-amino-1-(5-phospho-D-ribosyl)imidazole-4-carboxamide (10-formyl THF route): step 1/1. It participates in purine metabolism; IMP biosynthesis via de novo pathway; IMP from 5-formamido-1-(5-phospho-D-ribosyl)imidazole-4-carboxamide: step 1/1. This chain is Bifunctional purine biosynthesis protein PurH, found in Escherichia coli (strain 55989 / EAEC).